Here is a 99-residue protein sequence, read N- to C-terminus: uncharacterized protein (99 aa).

The helical transmembrane segment at 76 to 96 threads the bilayer; sequence VLLGLASGMIGGIIGMFMWVL.

Its subcellular location is the host membrane. This is an uncharacterized protein from Haemophilus phage HP1 (strain HP1c1) (Bacteriophage HP1).